The primary structure comprises 1042 residues: Putative type I restriction enzyme MjaIXP endonuclease subunit (1042 aa).

The Helicase ATP-binding domain occupies 323–487 (GETPEDRRIG…FLVFGDYISA (165 aa)). Residues 439–442 (DEAH) carry the DEAH box motif. The Helicase C-terminal domain maps to 551–731 (LTEDYLSKVS…DIKVVIEEMK (181 aa)).

The protein belongs to the HsdR family. As to quaternary structure, the type I restriction/modification system is composed of three polypeptides R, M and S.

It carries out the reaction Endonucleolytic cleavage of DNA to give random double-stranded fragments with terminal 5'-phosphates, ATP is simultaneously hydrolyzed.. Its function is as follows. The restriction (R) subunit of a type I restriction enzyme that recognizes 5'-CCAN(5)GTR-3' and cleaves a random distance away. The R subunit is required for both nuclease and ATPase activities, but not for modification. After locating a non-methylated recognition site, the enzyme complex serves as a molecular motor that translocates DNA in an ATP-dependent manner until a collision occurs that triggers cleavage. This is Putative type I restriction enzyme MjaIXP endonuclease subunit from Methanocaldococcus jannaschii (strain ATCC 43067 / DSM 2661 / JAL-1 / JCM 10045 / NBRC 100440) (Methanococcus jannaschii).